The chain runs to 295 residues: Iron-sulfur cluster carrier protein (295 aa).

38–45 provides a ligand contact to ATP; it reads GKGGVGKS.

It belongs to the Mrp/NBP35 ATP-binding proteins family. In terms of assembly, homodimer.

In terms of biological role, binds and transfers iron-sulfur (Fe-S) clusters to target apoproteins. Can hydrolyze ATP. The protein is Iron-sulfur cluster carrier protein of Pyrococcus abyssi (strain GE5 / Orsay).